Here is a 180-residue protein sequence, read N- to C-terminus: Shikimate kinase (180 aa).

14–19 (GAGKTC) serves as a coordination point for ATP. Residue T18 coordinates Mg(2+). D36, R60, and G82 together coordinate substrate. R120 contacts ATP. R139 provides a ligand contact to substrate.

This sequence belongs to the shikimate kinase family. As to quaternary structure, monomer. It depends on Mg(2+) as a cofactor.

The protein resides in the cytoplasm. The enzyme catalyses shikimate + ATP = 3-phosphoshikimate + ADP + H(+). Its pathway is metabolic intermediate biosynthesis; chorismate biosynthesis; chorismate from D-erythrose 4-phosphate and phosphoenolpyruvate: step 5/7. Functionally, catalyzes the specific phosphorylation of the 3-hydroxyl group of shikimic acid using ATP as a cosubstrate. The sequence is that of Shikimate kinase from Stenotrophomonas maltophilia (strain R551-3).